A 430-amino-acid polypeptide reads, in one-letter code: ATP-dependent RNA helicase cgh-1 (430 aa).

The Q motif signature appears at 43–71; it reads VEFEDFCLGRDLLMGIFEKGWEKPSPIQE. Residues 74–244 enclose the Helicase ATP-binding domain; that stretch reads IGVALTGQDI…QKHMHKPYEI (171 aa). Residue 87-94 participates in ATP binding; that stretch reads AKNGTGKT. The short motif at 192 to 195 is the DEAD box element; the sequence is DEAD. One can recognise a Helicase C-terminal domain in the interval 254-414; that stretch reads GVTQYYAFVQ…PIPKTVDPKL (161 aa).

This sequence belongs to the DEAD box helicase family. DDX6/DHH1 subfamily. Interacts with car-1 in a germline ribonucleoprotein complex. Interacts with ifet-1. Interacts with oma-1, which is a component of a ribonucleoprotein complex, in an RNA-dependent manner. Expression is restricted to two germline precursors Z2 and Z3 in L1 stage hermaphrodites, and is detectable specifically in the gonad at low levels into the L3 stage. Expression is significantly higher during the early L4 stage. In adults, expression remains gonad-specific and was not apparent in the somatically derived uterus. Expressed in germ granules (P granules); when associated with pgl-1.

The protein resides in the cytoplasm. It catalyses the reaction ATP + H2O = ADP + phosphate + H(+). Its function is as follows. Probable RNA helicase required for oocyte and sperm function. Also required to prevent the physiological germline apoptosis mechanism killing essentially all developing oocytes. The polypeptide is ATP-dependent RNA helicase cgh-1 (cgh-1) (Caenorhabditis elegans).